A 259-amino-acid chain; its full sequence is tRNA (guanine-N(1)-)-methyltransferase (259 aa).

Residues G117 and 137 to 142 (LGDFVL) each bind S-adenosyl-L-methionine.

The protein belongs to the RNA methyltransferase TrmD family. In terms of assembly, homodimer.

It localises to the cytoplasm. The enzyme catalyses guanosine(37) in tRNA + S-adenosyl-L-methionine = N(1)-methylguanosine(37) in tRNA + S-adenosyl-L-homocysteine + H(+). Functionally, specifically methylates guanosine-37 in various tRNAs. The polypeptide is tRNA (guanine-N(1)-)-methyltransferase (Polaromonas sp. (strain JS666 / ATCC BAA-500)).